A 163-amino-acid polypeptide reads, in one-letter code: Nucleotide-binding protein Tery_2743 (163 aa).

The protein belongs to the YajQ family.

Functionally, nucleotide-binding protein. This Trichodesmium erythraeum (strain IMS101) protein is Nucleotide-binding protein Tery_2743.